A 553-amino-acid polypeptide reads, in one-letter code: Putative transport protein Ent638_0015 (553 aa).

The next 5 helical transmembrane spans lie at I4–I24, G28–E48, F65–S85, L95–F115, and M158–V178. RCK C-terminal domains follow at residues K191–Q276 and E279–N361. The next 6 membrane-spanning stretches (helical) occupy residues M371–V391, A403–F425, I439–A459, I464–L484, Y493–A513, and L533–G553.

Belongs to the AAE transporter (TC 2.A.81) family. YidE subfamily.

Its subcellular location is the cell membrane. The polypeptide is Putative transport protein Ent638_0015 (Enterobacter sp. (strain 638)).